We begin with the raw amino-acid sequence, 374 residues long: MSLQFGPEYVRAIAPYVTGKPISEVAREFGLEAARIVKLASNENPLGMPASARVAMTAAIDGLARYPDANGFSLKAALHAKFGVPEAWITLGNGSNDILELAARALVAPGQGVIYAQHAFAVYALAAQEVGARAVEVPARDYGHDLDAMAAAITPDTRLIYVANPNNPTGTFLPADAVAAFLAKVPPTVVVVLDEAYNEFLKPEQQYDSIAWVRRYPNLLVSRTFSKAYGLAGLRVGYGIAQPQLTALLNRIRQPFNVNSLAQAAAVAALSDTEFLRRSAELNAAGYAQLTQAFARLGLEYVPSSGNFVLVRVGDDADAGARVNLALLRQGVIVRPVGNYGLPQWLRISIGLPEENAACIAALESALAQAEAAA.

N6-(pyridoxal phosphate)lysine is present on Lys-227.

It belongs to the class-II pyridoxal-phosphate-dependent aminotransferase family. Histidinol-phosphate aminotransferase subfamily. In terms of assembly, homodimer. Pyridoxal 5'-phosphate is required as a cofactor.

The enzyme catalyses L-histidinol phosphate + 2-oxoglutarate = 3-(imidazol-4-yl)-2-oxopropyl phosphate + L-glutamate. The protein operates within amino-acid biosynthesis; L-histidine biosynthesis; L-histidine from 5-phospho-alpha-D-ribose 1-diphosphate: step 7/9. This chain is Histidinol-phosphate aminotransferase 2 (hisC2), found in Ralstonia nicotianae (strain ATCC BAA-1114 / GMI1000) (Ralstonia solanacearum).